Reading from the N-terminus, the 750-residue chain is Photosystem I P700 chlorophyll a apoprotein A1 (750 aa).

8 helical membrane passes run 70 to 93 (VFSA…FHGA), 156 to 179 (LYCT…FHYH), 195 to 219 (LNHH…HVSL), 291 to 309 (IAHH…GHMY), 346 to 369 (WHAQ…HHMY), 385 to 411 (LSLF…IFMV), 433 to 455 (AIIS…LYIH), and 531 to 549 (FLVH…LILL). [4Fe-4S] cluster is bound by residues cysteine 573 and cysteine 582. 2 consecutive transmembrane segments (helical) span residues 589 to 610 (HVFL…HFSW) and 664 to 686 (LSAY…MFLF). Histidine 675 serves as a coordination point for chlorophyll a'. Chlorophyll a-binding residues include methionine 683 and tyrosine 691. Tryptophan 692 lines the phylloquinone pocket. A helical transmembrane segment spans residues 724 to 744 (AVGVTHYLLGGIATTWAFFLA).

The protein belongs to the PsaA/PsaB family. In terms of assembly, the PsaA/B heterodimer binds the P700 chlorophyll special pair and subsequent electron acceptors. PSI consists of a core antenna complex that captures photons, and an electron transfer chain that converts photonic excitation into a charge separation. The eukaryotic PSI reaction center is composed of at least 11 subunits. P700 is a chlorophyll a/chlorophyll a' dimer, A0 is one or more chlorophyll a, A1 is one or both phylloquinones and FX is a shared 4Fe-4S iron-sulfur center. serves as cofactor.

It localises to the plastid. It is found in the chloroplast thylakoid membrane. The catalysed reaction is reduced [plastocyanin] + hnu + oxidized [2Fe-2S]-[ferredoxin] = oxidized [plastocyanin] + reduced [2Fe-2S]-[ferredoxin]. PsaA and PsaB bind P700, the primary electron donor of photosystem I (PSI), as well as the electron acceptors A0, A1 and FX. PSI is a plastocyanin-ferredoxin oxidoreductase, converting photonic excitation into a charge separation, which transfers an electron from the donor P700 chlorophyll pair to the spectroscopically characterized acceptors A0, A1, FX, FA and FB in turn. Oxidized P700 is reduced on the lumenal side of the thylakoid membrane by plastocyanin. This is Photosystem I P700 chlorophyll a apoprotein A1 from Daucus carota (Wild carrot).